The sequence spans 231 residues: Eukaryotic translation initiation factor 4E allele Eva1 (231 aa).

Residues 1–20 are compositionally biased toward basic and acidic residues; sequence MAAAEMERTTSFDAAEKLKA. The tract at residues 1–34 is disordered; the sequence is MAAAEMERTTSFDAAEKLKAADAGGGEVDDELEE. 2 EIF4G-binding regions span residues 56-59 and 66-102; these read HPLE and FDNP…NNIH. MRNA is bound by residues 74–79, Lys-106, and 124–125; these read RQIDWG and WE. Cys-129 and Cys-167 form a disulfide bridge. The tract at residues 150–159 is EIF4G-binding; the sequence is YTLLAMIGHQ. MRNA contacts are provided by residues 174-179 and 219-223; these read RVKGEK and KRLDR.

This sequence belongs to the eukaryotic initiation factor 4E family. EIF4F is a multi-subunit complex, the composition of which varies with external and internal environmental conditions. It is composed of at least EIF4A, EIF4E and EIF4G. EIF4E is also known to interact with other partners. In higher plants two isoforms of EIF4F have been identified, named isoform EIF4F and isoform EIF(iso)4F. Isoform EIF4F has subunits p220 and p26, whereas isoform EIF(iso)4F has subunits p82 and p28. In terms of assembly, (Microbial infection) Interacts with potyvirus viral genome-linked protein (VPg); this interaction is possible in susceptible hosts but impaired in resistant plants. In terms of processing, according to the redox status, the Cys-129-Cys-167 disulfide bridge may have a role in regulating protein function by affecting its ability to bind capped mRNA.

It localises to the nucleus. Its subcellular location is the cytoplasm. Functionally, component of the protein complex eIF4F, which is involved in the recognition of the mRNA cap, ATP-dependent unwinding of 5'-terminal secondary structure and recruitment of mRNA to the ribosome. Recognizes and binds the 7-methylguanosine-containing mRNA cap during an early step in the initiation of protein synthesis and facilitates ribosome binding by inducing the unwinding of the mRNAs secondary structures. Key component of recessive resistance to potyviruses. (Microbial infection) Susceptibility host factor required for viral infection (e.g. Potato virus Y (PVY)) by recruiting viral RNAs to the host ribosomal complex via an interaction with viral genome-linked protein (VPg). Displayed sequence is the allele Eva1 that confers resistance to potato virus Y (PVY) by failing to interact with the viral VPg protein. The protein is Eukaryotic translation initiation factor 4E allele Eva1 of Solanum etuberosum (Wild potato).